A 73-amino-acid chain; its full sequence is Small ribosomal subunit protein bS18 (73 aa).

This sequence belongs to the bacterial ribosomal protein bS18 family. As to quaternary structure, part of the 30S ribosomal subunit. Forms a tight heterodimer with protein bS6.

Binds as a heterodimer with protein bS6 to the central domain of the 16S rRNA, where it helps stabilize the platform of the 30S subunit. The sequence is that of Small ribosomal subunit protein bS18 from Prochlorococcus marinus (strain NATL2A).